The chain runs to 367 residues: Peptide chain release factor 2 (367 aa).

Q254 carries the N5-methylglutamine modification.

The protein belongs to the prokaryotic/mitochondrial release factor family. In terms of processing, methylated by PrmC. Methylation increases the termination efficiency of RF2.

The protein localises to the cytoplasm. In terms of biological role, peptide chain release factor 2 directs the termination of translation in response to the peptide chain termination codons UGA and UAA. This Neisseria meningitidis serogroup C / serotype 2a (strain ATCC 700532 / DSM 15464 / FAM18) protein is Peptide chain release factor 2.